Reading from the N-terminus, the 284-residue chain is RNase adapter protein RapZ (284 aa).

8–15 (GRSGSGKS) contacts ATP. 56-59 (DVRN) provides a ligand contact to GTP. An RNA-binding region spans residues 266 to 284 (RARGKNVQSRHRTLEKRKQ).

It belongs to the RapZ-like family. RapZ subfamily. Homotrimer.

Its function is as follows. Modulates the synthesis of GlmS, by affecting the processing and stability of the regulatory small RNA GlmZ. When glucosamine-6-phosphate (GlcN6P) concentrations are high in the cell, RapZ binds GlmZ and targets it to cleavage by RNase E. Consequently, GlmZ is inactivated and unable to activate GlmS synthesis. Under low GlcN6P concentrations, RapZ is sequestered and inactivated by an other regulatory small RNA, GlmY, preventing GlmZ degradation and leading to synthesis of GlmS. The sequence is that of RNase adapter protein RapZ from Yersinia pseudotuberculosis serotype O:1b (strain IP 31758).